A 218-amino-acid chain; its full sequence is Embryonic polyadenylate-binding protein 2-A (218 aa).

Basic and acidic residues predominate over residues 1–16 (MSERVSEEPGLDKGDG). Disordered regions lie at residues 1–26 (MSER…DDPE) and 169–218 (RTNM…NHPY). The region spanning 93-170 (RSVYVGNVDY…RTIKVLPKRT (78 aa)) is the RRM domain. The span at 205-218 (FRGCGRPGPLNHPY) shows a compositional bias: low complexity.

The protein localises to the cytoplasm. In terms of biological role, binds the poly(A) tail of mRNA. Unable to interact with the cap-binding complex and is therefore unlikely to be involved in translation initiation. The chain is Embryonic polyadenylate-binding protein 2-A (Pabpn1l-a) from Xenopus laevis (African clawed frog).